A 64-amino-acid chain; its full sequence is Small ribosomal subunit protein bS21 (64 aa).

This sequence belongs to the bacterial ribosomal protein bS21 family.

The sequence is that of Small ribosomal subunit protein bS21 from Sulfurihydrogenibium sp. (strain YO3AOP1).